The sequence spans 279 residues: Ribosomal RNA small subunit methyltransferase A (279 aa).

Residues Asn25, Leu27, Gly52, Glu73, Asp98, and Asn120 each coordinate S-adenosyl-L-methionine.

This sequence belongs to the class I-like SAM-binding methyltransferase superfamily. rRNA adenine N(6)-methyltransferase family. RsmA subfamily.

It localises to the cytoplasm. It catalyses the reaction adenosine(1518)/adenosine(1519) in 16S rRNA + 4 S-adenosyl-L-methionine = N(6)-dimethyladenosine(1518)/N(6)-dimethyladenosine(1519) in 16S rRNA + 4 S-adenosyl-L-homocysteine + 4 H(+). Functionally, specifically dimethylates two adjacent adenosines (A1518 and A1519) in the loop of a conserved hairpin near the 3'-end of 16S rRNA in the 30S particle. May play a critical role in biogenesis of 30S subunits. The polypeptide is Ribosomal RNA small subunit methyltransferase A (Magnetococcus marinus (strain ATCC BAA-1437 / JCM 17883 / MC-1)).